Consider the following 345-residue polypeptide: Holliday junction branch migration complex subunit RuvB (345 aa).

A large ATPase domain (RuvB-L) region spans residues 3-187 (LDILQNRNNL…FGFTARLDFY (185 aa)). ATP contacts are provided by residues leucine 26, arginine 27, glycine 68, lysine 71, threonine 72, threonine 73, 134 to 136 (EDF), arginine 177, tyrosine 187, and arginine 224. Threonine 72 contacts Mg(2+). The tract at residues 188 to 259 (SPEELLQVLI…IALKAMDVYE (72 aa)) is small ATPAse domain (RuvB-S). Positions 262–345 (SLGLDRLDRA…EDLSGFELYL (84 aa)) are head domain (RuvB-H). Residues arginine 317 and arginine 322 each coordinate DNA.

It belongs to the RuvB family. Homohexamer. Forms an RuvA(8)-RuvB(12)-Holliday junction (HJ) complex. HJ DNA is sandwiched between 2 RuvA tetramers; dsDNA enters through RuvA and exits via RuvB. An RuvB hexamer assembles on each DNA strand where it exits the tetramer. Each RuvB hexamer is contacted by two RuvA subunits (via domain III) on 2 adjacent RuvB subunits; this complex drives branch migration. In the full resolvosome a probable DNA-RuvA(4)-RuvB(12)-RuvC(2) complex forms which resolves the HJ.

It is found in the cytoplasm. The catalysed reaction is ATP + H2O = ADP + phosphate + H(+). The RuvA-RuvB-RuvC complex processes Holliday junction (HJ) DNA during genetic recombination and DNA repair, while the RuvA-RuvB complex plays an important role in the rescue of blocked DNA replication forks via replication fork reversal (RFR). RuvA specifically binds to HJ cruciform DNA, conferring on it an open structure. The RuvB hexamer acts as an ATP-dependent pump, pulling dsDNA into and through the RuvAB complex. RuvB forms 2 homohexamers on either side of HJ DNA bound by 1 or 2 RuvA tetramers; 4 subunits per hexamer contact DNA at a time. Coordinated motions by a converter formed by DNA-disengaged RuvB subunits stimulates ATP hydrolysis and nucleotide exchange. Immobilization of the converter enables RuvB to convert the ATP-contained energy into a lever motion, pulling 2 nucleotides of DNA out of the RuvA tetramer per ATP hydrolyzed, thus driving DNA branch migration. The RuvB motors rotate together with the DNA substrate, which together with the progressing nucleotide cycle form the mechanistic basis for DNA recombination by continuous HJ branch migration. Branch migration allows RuvC to scan DNA until it finds its consensus sequence, where it cleaves and resolves cruciform DNA. In Tropheryma whipplei (strain TW08/27) (Whipple's bacillus), this protein is Holliday junction branch migration complex subunit RuvB.